Here is a 451-residue protein sequence, read N- to C-terminus: Tryptophan biosynthesis protein TrpCF (451 aa).

Residues 1 to 256 form an indole-3-glycerol phosphate synthase region; it reads MQETILNKII…TNIKSLIIGD (256 aa). An N-(5'-phosphoribosyl)anthranilate isomerase region spans residues 257-451; it reads NKVCGLTRII…ISLIFKKLTF (195 aa).

It in the N-terminal section; belongs to the TrpC family. This sequence in the C-terminal section; belongs to the TrpF family. As to quaternary structure, monomer.

It carries out the reaction N-(5-phospho-beta-D-ribosyl)anthranilate = 1-(2-carboxyphenylamino)-1-deoxy-D-ribulose 5-phosphate. The catalysed reaction is 1-(2-carboxyphenylamino)-1-deoxy-D-ribulose 5-phosphate + H(+) = (1S,2R)-1-C-(indol-3-yl)glycerol 3-phosphate + CO2 + H2O. Its pathway is amino-acid biosynthesis; L-tryptophan biosynthesis; L-tryptophan from chorismate: step 3/5. It functions in the pathway amino-acid biosynthesis; L-tryptophan biosynthesis; L-tryptophan from chorismate: step 4/5. Bifunctional enzyme that catalyzes two sequential steps of tryptophan biosynthetic pathway. The first reaction is catalyzed by the isomerase, coded by the TrpF domain; the second reaction is catalyzed by the synthase, coded by the TrpC domain. In Buchnera aphidicola subsp. Schizaphis graminum (strain Sg), this protein is Tryptophan biosynthesis protein TrpCF (trpC).